The chain runs to 73 residues: MKSSIHVVLFFLLSLVASMALPRRQAQAPFAVVDFSGKAACHSILTSCRVDTDCCAGLKCGIFDEDALCVPQG.

Positions 1–20 are cleaved as a signal peptide; that stretch reads MKSSIHVVLFFLLSLVASMA. 3 disulfide bridges follow: C41-C55, C48-C60, and C54-C69.

This sequence belongs to the UPF0499 family.

Its subcellular location is the secreted. The sequence is that of UPF0499 protein CHGG_06021 from Chaetomium globosum (strain ATCC 6205 / CBS 148.51 / DSM 1962 / NBRC 6347 / NRRL 1970) (Soil fungus).